Here is a 133-residue protein sequence, read N- to C-terminus: UPF0344 protein SH1980 (133 aa).

Transmembrane regions (helical) follow at residues 1 to 21 (MLHM…IAFL), 42 to 62 (VFML…FMAA), 71 to 91 (MLLT…EVSI), and 103 to 123 (LFWA…ILPW).

The protein belongs to the UPF0344 family.

It is found in the cell membrane. The chain is UPF0344 protein SH1980 from Staphylococcus haemolyticus (strain JCSC1435).